A 79-amino-acid chain; its full sequence is U-actitoxin-Avd8b (79 aa).

The N-terminal stretch at 1 to 19 (MKSLVIVFVVLLGVAMISA) is a signal peptide. Residues 20-36 (NEEELLAILQDQRNDAR) constitute a propeptide that is removed on maturation.

This sequence belongs to the sea anemone 8 toxin family.

It localises to the secreted. It is found in the nematocyst. The protein is U-actitoxin-Avd8b of Anemonia viridis (Snakelocks anemone).